Reading from the N-terminus, the 503-residue chain is Lactation elevated protein 1 homolog B (503 aa).

The disordered stretch occupies residues 108-155; sequence LQNQPTSELQDKVGSRETVNICRPDENVSNEKEDQQEESSKPHPPQGY. Positions 130-148 are enriched in basic and acidic residues; the sequence is RPDENVSNEKEDQQEESSK. 159–166 contacts ATP; that stretch reads GNVGTGKT.

It belongs to the AFG1 ATPase family.

This chain is Lactation elevated protein 1 homolog B (lace1b), found in Danio rerio (Zebrafish).